A 252-amino-acid polypeptide reads, in one-letter code: Eukaryotic translation initiation factor 3 subunit J (252 aa).

Disordered stretches follow at residues 24 to 107 and 209 to 232; these read VPAG…TPEE and KQSK…TMKD. The segment covering 36–56 has biased composition (acidic residues); sequence EDEEDDVKDNWDDEEEEEEVK. Basic and acidic residues predominate over residues 57-107; it reads EAEVKQEPKVSEKKKIAEKIKEKEKQQKKKQEELKKRLEAPEEHKELTPEE. Residues 65–130 adopt a coiled-coil conformation; sequence KVSEKKKIAE…ESDLELAKET (66 aa).

This sequence belongs to the eIF-3 subunit J family. In terms of assembly, component of the eukaryotic translation initiation factor 3 (eIF-3) complex, which is composed of 13 subunits: EIF3A, EIF3B, EIF3C, EIF3D, EIF3E, EIF3F, EIF3G, EIF3H, EIF3I, EIF3J, EIF3K, EIF3L and EIF3M.

Its subcellular location is the cytoplasm. In terms of biological role, component of the eukaryotic translation initiation factor 3 (eIF-3) complex, which is involved in protein synthesis of a specialized repertoire of mRNAs and, together with other initiation factors, stimulates binding of mRNA and methionyl-tRNAi to the 40S ribosome. The eIF-3 complex specifically targets and initiates translation of a subset of mRNAs involved in cell proliferation. The sequence is that of Eukaryotic translation initiation factor 3 subunit J from Gallus gallus (Chicken).